The following is a 195-amino-acid chain: Holliday junction branch migration complex subunit RuvA (195 aa).

Residues 1–66 (MNYLIFKVIY…LIIKDLYGFR (66 aa)) form a domain I region. The domain II stretch occupies residues 67–141 (TYNERLLFID…KYINKVNDKN (75 aa)). Asparagine 141 is a region of interest (flexible linker). Residues 141–195 (NNWAKELSIGLENLGYTKKDIEYAITKVKINSQQDIDISEIISSAIKEISLRHEN) form a domain III region.

The protein belongs to the RuvA family. Homotetramer. Forms an RuvA(8)-RuvB(12)-Holliday junction (HJ) complex. HJ DNA is sandwiched between 2 RuvA tetramers; dsDNA enters through RuvA and exits via RuvB. An RuvB hexamer assembles on each DNA strand where it exits the tetramer. Each RuvB hexamer is contacted by two RuvA subunits (via domain III) on 2 adjacent RuvB subunits; this complex drives branch migration. In the full resolvosome a probable DNA-RuvA(4)-RuvB(12)-RuvC(2) complex forms which resolves the HJ.

The protein resides in the cytoplasm. In terms of biological role, the RuvA-RuvB-RuvC complex processes Holliday junction (HJ) DNA during genetic recombination and DNA repair, while the RuvA-RuvB complex plays an important role in the rescue of blocked DNA replication forks via replication fork reversal (RFR). RuvA specifically binds to HJ cruciform DNA, conferring on it an open structure. The RuvB hexamer acts as an ATP-dependent pump, pulling dsDNA into and through the RuvAB complex. HJ branch migration allows RuvC to scan DNA until it finds its consensus sequence, where it cleaves and resolves the cruciform DNA. This Ureaplasma parvum serovar 3 (strain ATCC 27815 / 27 / NCTC 11736) protein is Holliday junction branch migration complex subunit RuvA.